We begin with the raw amino-acid sequence, 101 residues long: uncharacterized protein (101 aa).

A compositionally biased stretch (basic and acidic residues) spans 1–11 (MSDEGYRELVE). The tract at residues 1–26 (MSDEGYRELVESKSAPTTPGPWSPDR) is disordered.

This is an uncharacterized protein from Torque teno canis virus (isolate Cf-TTV10).